A 1093-amino-acid chain; its full sequence is Isoleucine--tRNA ligase, chloroplastic/mitochondrial (1093 aa).

Positions 69–103 (PNNEFGHSSKRRSRGPVMAAKKASEGEKQEDGKYK) are disordered. The span at 90-103 (KASEGEKQEDGKYK) shows a compositional bias: basic and acidic residues. Residues 155–165 (PYANGDLHMGH) carry the 'HIGH' region motif. Glu682 contacts L-isoleucyl-5'-AMP. The 'KMSKS' region signature appears at 723–727 (KMSKS). An ATP-binding site is contributed by Lys726. The Zn(2+) site is built by Cys1050, Cys1053, Cys1070, and Cys1073.

This sequence belongs to the class-I aminoacyl-tRNA synthetase family.

The protein localises to the plastid. It is found in the chloroplast. It localises to the mitochondrion. It carries out the reaction tRNA(Ile) + L-isoleucine + ATP = L-isoleucyl-tRNA(Ile) + AMP + diphosphate. This Arabidopsis thaliana (Mouse-ear cress) protein is Isoleucine--tRNA ligase, chloroplastic/mitochondrial.